A 235-amino-acid chain; its full sequence is 7-cyano-7-deazaguanine synthase (235 aa).

Residue 12–22 (FSGGQDSTTCL) participates in ATP binding. Residues C200, C215, C218, and C221 each contribute to the Zn(2+) site.

This sequence belongs to the QueC family. Requires Zn(2+) as cofactor.

It catalyses the reaction 7-carboxy-7-deazaguanine + NH4(+) + ATP = 7-cyano-7-deazaguanine + ADP + phosphate + H2O + H(+). The protein operates within purine metabolism; 7-cyano-7-deazaguanine biosynthesis. In terms of biological role, catalyzes the ATP-dependent conversion of 7-carboxy-7-deazaguanine (CDG) to 7-cyano-7-deazaguanine (preQ(0)). This Leptothrix cholodnii (strain ATCC 51168 / LMG 8142 / SP-6) (Leptothrix discophora (strain SP-6)) protein is 7-cyano-7-deazaguanine synthase.